Reading from the N-terminus, the 1000-residue chain is ATP-dependent DNA/RNA helicase DHX36 (1000 aa).

Positions M1–G43 are required for recruitment to cytoplasmic stress granules. Positions M1–E53 are disordered. Positions M1–A96 are required for the pre-miR-134 transport. The necessary for nuclear and nucleolar caps localizations stretch occupies residues M1–M192. A compositionally biased stretch (gly residues) spans P15–G40. Residues H45–K67 form a DSM (DHX36-specific motif) region. The interval H45 to K97 is required for G4-DNA- and G4-RNA-binding. 2 recA-like domain regions span residues N98–I378 and P379–L620. A Phosphoserine modification is found at S153. The Helicase ATP-binding domain maps to V209–P379. Residue G225–T230 participates in ATP binding. Residues R257–Q309 form a necessary for interaction with single-stranded DNA at the 3'-end of the G4-DNA structure region. The DEAH box motif lies at D326 to H329. Residues E327 and H329 each contribute to the Mg(2+) site. The Helicase C-terminal domain maps to A469 to R639. Residues W490–S549 are necessary for interaction with single-stranded DNA at the 3'-end of the G4-DNA structure. The Nuclear localization signal signature appears at D509 to M520. ATP is bound by residues S549 and R594–R597. Positions P621–V690 are WH domain. Necessary for interaction with single-stranded DNA at the 3'-end of the G4-DNA structure stretches follow at residues E630–P689, N841–H852, and H862–Y892. Residues P833–V897 form an OB-fold-like subdomains region. The residue at position 939 (K939) is an N6-acetyllysine.

As to quaternary structure, found in a multi-helicase-TICAM1 complex at least composed of DHX36, DDX1, DDX21 and TICAM1; this complex exists in resting cells with or without dsRNA poly(I:C) ligand stimulation. Interacts (via C-terminus) with TICAM1 (via TIR domain). Interacts (via C-terminus) with DDX21; this interaction serves as bridges to TICAM1. Interacts with TERT; this interaction is dependent on the ability of DHX36 to bind to the G-quadruplex RNA (G4-RNA) structure present in the telomerase RNA template component (TERC). Interacts with DKC1; this interaction is dependent on the ability of DHX36 to bind to the G4-RNA structure present in TERC. Interacts with PARN; this interaction stimulates PARN to enhance uPA mRNA decay. Interacts with EXOSC3; this interaction occurs in a RNase-insensitive manner. Interacts with EXOSC10; this interaction occurs in a RNase-insensitive manner. Interacts with ILF3; this interaction occurs in a RNA-dependent manner. Interacts with ELAVL1; this interaction occurs in an RNA-dependent manner. Interacts with DDX5; this interaction occurs in a RNA-dependent manner. Interacts with DDX17; this interaction occurs in a RNA-dependent manner. Interacts with HDAC1; this interaction occurs in a RNA-dependent manner. Interacts with HDAC3; this interaction occurs in a RNA-dependent manner. Interacts with HDAC4. Interacts with AGO1. Interacts with AGO2. Interacts with ERCC6. Requires Mg(2+) as cofactor.

It is found in the nucleus. Its subcellular location is the cytoplasm. The protein localises to the cytosol. The protein resides in the stress granule. It localises to the nucleus speckle. It is found in the chromosome. Its subcellular location is the telomere. The protein localises to the mitochondrion. The protein resides in the perikaryon. It localises to the cell projection. It is found in the dendrite. Its subcellular location is the axon. It carries out the reaction ATP + H2O = ADP + phosphate + H(+). ATPase activity is enhanced in the presence of homomeric poly(U) RNAs, but not by double-stranded DNA (dsDNA), double-stranded RNA (dsRNA) and tRNA. In terms of biological role, multifunctional ATP-dependent helicase that unwinds G-quadruplex (G4) structures. Plays a role in many biological processes such as genomic integrity, gene expression regulations and as a sensor to initiate antiviral responses. G4 structures correspond to helical structures containing guanine tetrads. Binds with high affinity to and unwinds G4 structures that are formed in nucleic acids (G4-DNA and G4-RNA). Plays a role in genomic integrity. Converts the G4-RNA structure present in telomerase RNA template component (TREC) into a double-stranded RNA to promote P1 helix formation that acts as a template boundary ensuring accurate reverse transcription. Plays a role in transcriptional regulation. Resolves G4-DNA structures in promoters of genes, such as YY1, KIT/c-kit and ALPL and positively regulates their expression. Plays a role in post-transcriptional regulation. Unwinds a G4-RNA structure located in the 3'-UTR polyadenylation site of the pre-mRNA TP53 and stimulates TP53 pre-mRNA 3'-end processing in response to ultraviolet (UV)-induced DNA damage. Binds to the precursor-microRNA-134 (pre-miR-134) terminal loop and regulates its transport into the synapto-dendritic compartment. Involved in the pre-miR-134-dependent inhibition of target gene expression and the control of dendritic spine size. Plays a role in the regulation of cytoplasmic mRNA translation and mRNA stability. Binds to both G4-RNA structures and alternative non-quadruplex-forming sequence within the 3'-UTR of the PITX1 mRNA regulating negatively PITX1 protein expression. Binds to both G4-RNA structure in the 5'-UTR and AU-rich elements (AREs) localized in the 3'-UTR of NKX2-5 mRNA to either stimulate protein translation or induce mRNA decay in an ELAVL1-dependent manner, respectively. Also binds to ARE sequences present in several mRNAs mediating exosome-mediated 3'-5' mRNA degradation. Involved in cytoplasmic urokinase-type plasminogen activator (uPA) mRNA decay. Component of a multi-helicase-TICAM1 complex that acts as a cytoplasmic sensor of viral double-stranded RNA (dsRNA) and plays a role in the activation of a cascade of antiviral responses including the induction of pro-inflammatory cytokines via the adapter molecule TICAM1. Required for the early embryonic development and hematopoiesis. Involved in the regulation of cardioblast differentiation and proliferation during heart development. Involved in spermatogonia differentiation. May play a role in ossification. The polypeptide is ATP-dependent DNA/RNA helicase DHX36 (Rattus norvegicus (Rat)).